The chain runs to 364 residues: Cobalt-precorrin-5B C(1)-methyltransferase (364 aa).

This sequence belongs to the CbiD family.

The enzyme catalyses Co-precorrin-5B + S-adenosyl-L-methionine = Co-precorrin-6A + S-adenosyl-L-homocysteine. The protein operates within cofactor biosynthesis; adenosylcobalamin biosynthesis; cob(II)yrinate a,c-diamide from sirohydrochlorin (anaerobic route): step 6/10. Catalyzes the methylation of C-1 in cobalt-precorrin-5B to form cobalt-precorrin-6A. The polypeptide is Cobalt-precorrin-5B C(1)-methyltransferase (Pseudomonas entomophila (strain L48)).